We begin with the raw amino-acid sequence, 316 residues long: Phosphoribosylaminoimidazole-succinocarboxamide synthase (316 aa).

Belongs to the SAICAR synthetase family.

The enzyme catalyses 5-amino-1-(5-phospho-D-ribosyl)imidazole-4-carboxylate + L-aspartate + ATP = (2S)-2-[5-amino-1-(5-phospho-beta-D-ribosyl)imidazole-4-carboxamido]succinate + ADP + phosphate + 2 H(+). Its pathway is purine metabolism; IMP biosynthesis via de novo pathway; 5-amino-1-(5-phospho-D-ribosyl)imidazole-4-carboxamide from 5-amino-1-(5-phospho-D-ribosyl)imidazole-4-carboxylate: step 1/2. The polypeptide is Phosphoribosylaminoimidazole-succinocarboxamide synthase (Flavobacterium psychrophilum (strain ATCC 49511 / DSM 21280 / CIP 103535 / JIP02/86)).